Consider the following 261-residue polypeptide: Thiamine thiazole synthase (261 aa).

NAD(+)-binding positions include alanine 33, 52 to 53 (ER), glycine 60, valine 124, and 152 to 154 (HVD). Fe cation is bound by residues aspartate 154 and histidine 169. Residue isoleucine 219 coordinates NAD(+). Arginine 229 contacts glycine.

This sequence belongs to the THI4 family. Homooctamer; tetramer of dimers. Requires Fe(2+) as cofactor.

The catalysed reaction is hydrogen sulfide + glycine + NAD(+) = ADP-5-ethyl-4-methylthiazole-2-carboxylate + nicotinamide + 3 H2O + H(+). It participates in cofactor biosynthesis; thiamine diphosphate biosynthesis. Involved in the biosynthesis of the thiazole moiety of thiamine. Catalyzes the conversion of NAD and glycine to adenosine diphosphate 5-(2-hydroxyethyl)-4-methylthiazole-2-carboxylate (ADT), an adenylated thiazole intermediate, using free sulfide as a source of sulfur. This chain is Thiamine thiazole synthase, found in Pyrobaculum aerophilum (strain ATCC 51768 / DSM 7523 / JCM 9630 / CIP 104966 / NBRC 100827 / IM2).